A 527-amino-acid polypeptide reads, in one-letter code: Transcription factor RBF1 (527 aa).

5 disordered regions span residues 1–36 (MSSN…IGAS), 258–281 (ANLY…HNEE), 328–365 (HHLL…QQAA), 395–433 (QLSQ…HGLD), and 470–527 (TQGN…SGFL). Residues 160–300 (HVRDALTTDE…LRMINPQHNH (141 aa)) mediate DNA binding. The span at 263–281 (NEKDQKRKNKPDEPGHNEE) shows a compositional bias: basic and acidic residues. Low complexity-rich tracts occupy residues 332-365 (QQEQ…QQAA) and 395-428 (QLSQ…PQQT).

Belongs to the RBF1 family.

The protein localises to the nucleus. It localises to the chromosome. The protein resides in the telomere. Transcriptional activator that binds to the RPG box and to telomeres. Involved in the regulation of the transition between yeast and filamentous forms and plays a role in virulence. Induces expression of HWP1, a major hyphal cell protein and virulence factor. This Candida albicans (Yeast) protein is Transcription factor RBF1 (RBF1).